Reading from the N-terminus, the 315-residue chain is tRNA-dihydrouridine(16) synthase (315 aa).

FMN is bound by residues 7 to 9 (PME) and Q68. Residue C98 is the Proton donor of the active site. Residues K139, 199–201 (NGE), and 223–224 (GR) contribute to the FMN site.

It belongs to the Dus family. DusC subfamily. The cofactor is FMN.

The enzyme catalyses 5,6-dihydrouridine(16) in tRNA + NADP(+) = uridine(16) in tRNA + NADPH + H(+). The catalysed reaction is 5,6-dihydrouridine(16) in tRNA + NAD(+) = uridine(16) in tRNA + NADH + H(+). Catalyzes the synthesis of 5,6-dihydrouridine (D), a modified base found in the D-loop of most tRNAs, via the reduction of the C5-C6 double bond in target uridines. Specifically modifies U16 in tRNAs. The polypeptide is tRNA-dihydrouridine(16) synthase (Shewanella oneidensis (strain ATCC 700550 / JCM 31522 / CIP 106686 / LMG 19005 / NCIMB 14063 / MR-1)).